A 474-amino-acid polypeptide reads, in one-letter code: Transcription factor SOX-4 (474 aa).

The span at 1–10 shows a compositional bias: polar residues; that stretch reads MVQQTNNAEN. Residues 1–58 are disordered; that stretch reads MVQQTNNAENTEALLAGESSDSGAGLELGIASSPTPGSTASTGGKADDPSWCKTPSGH. The segment covering 31 to 44 has biased composition (low complexity); it reads ASSPTPGSTASTGG. The HMG box DNA-binding region spans 59 to 127; the sequence is IKRPMNAFMV…KHMADYPDYK (69 aa). N6-acetyllysine is present on lysine 95. Disordered regions lie at residues 128–228, 262–286, and 302–416; these read YRPR…GGGK, ARTP…APGK, and LGTS…NFES. The segment covering 138 to 149 has biased composition (low complexity); the sequence is NANSSSSAAASS. Residues 158-189 are compositionally biased toward gly residues; that stretch reads VGGSGGGGHGGGGGGGSSNAGGGGGGASGGGA. Low complexity-rich tracts occupy residues 266–283, 304–320, 336–354, and 366–396; these read SASA…ALAA, TSSS…DPSD, APSL…AGRS, and AASP…GSSS. A compositionally biased stretch (acidic residues) spans 397-406; sequence SDDEFEDDLL. The segment covering 407–416 has biased composition (low complexity); the sequence is DLNPSSNFES. The 9aaTAD motif lies at 426-434; the sequence is SALDRDLDF.

In terms of assembly, interacts with UBE2I. Interacts with HDAC1; interaction inhibits the transcriptional activator activity. Acetylation at Lys-95 by KAT5 promotes the transcription activator activity and is required during myoblast differentiation. Acetylation by KAT5 abolishes the interaction between SOX4 and HDAC1 and switches SOX4 into a transcriptional activator. In terms of tissue distribution, testis, brain, and heart.

Its subcellular location is the nucleus. Transcriptional activator that binds with high affinity to the T-cell enhancer motif 5'-AACAAAG-3' motif. Required for IL17A-producing Vgamma2-positive gamma-delta T-cell maturation and development, via binding to regulator loci of RORC to modulate expression. Involved in skeletal myoblast differentiation by promoting gene expression of CALD1. This Homo sapiens (Human) protein is Transcription factor SOX-4.